The chain runs to 235 residues: Sugar fermentation stimulation protein homolog (235 aa).

Belongs to the SfsA family.

The sequence is that of Sugar fermentation stimulation protein homolog from Maricaulis maris (strain MCS10) (Caulobacter maris).